A 173-amino-acid polypeptide reads, in one-letter code: Crossover junction endodeoxyribonuclease RuvC (173 aa).

Residues Asp-8, Glu-67, and Asp-139 contribute to the active site. Residues Asp-8, Glu-67, and Asp-139 each contribute to the Mg(2+) site.

The protein belongs to the RuvC family. In terms of assembly, homodimer which binds Holliday junction (HJ) DNA. The HJ becomes 2-fold symmetrical on binding to RuvC with unstacked arms; it has a different conformation from HJ DNA in complex with RuvA. In the full resolvosome a probable DNA-RuvA(4)-RuvB(12)-RuvC(2) complex forms which resolves the HJ. The cofactor is Mg(2+).

The protein localises to the cytoplasm. The enzyme catalyses Endonucleolytic cleavage at a junction such as a reciprocal single-stranded crossover between two homologous DNA duplexes (Holliday junction).. Functionally, the RuvA-RuvB-RuvC complex processes Holliday junction (HJ) DNA during genetic recombination and DNA repair. Endonuclease that resolves HJ intermediates. Cleaves cruciform DNA by making single-stranded nicks across the HJ at symmetrical positions within the homologous arms, yielding a 5'-phosphate and a 3'-hydroxyl group; requires a central core of homology in the junction. The consensus cleavage sequence is 5'-(A/T)TT(C/G)-3'. Cleavage occurs on the 3'-side of the TT dinucleotide at the point of strand exchange. HJ branch migration catalyzed by RuvA-RuvB allows RuvC to scan DNA until it finds its consensus sequence, where it cleaves and resolves the cruciform DNA. The protein is Crossover junction endodeoxyribonuclease RuvC of Vibrio campbellii (strain ATCC BAA-1116).